A 69-amino-acid polypeptide reads, in one-letter code: Large ribosomal subunit protein bL28 (69 aa).

The interval 1–27 (MSRRCSVSGKGPLVGNNVSHANNKTKR) is disordered.

It belongs to the bacterial ribosomal protein bL28 family.

The protein is Large ribosomal subunit protein bL28 of Sulfurovum sp. (strain NBC37-1).